Consider the following 37-residue polypeptide: Large ribosomal subunit protein bL36 (37 aa).

Belongs to the bacterial ribosomal protein bL36 family.

This Moorella thermoacetica (strain ATCC 39073 / JCM 9320) protein is Large ribosomal subunit protein bL36.